The primary structure comprises 707 residues: MSDTTDLMGARVEETAAAPATDASAPATGAGSRRRRGTGLEGMVLAELQQVASGLGIRGTARMRKSQLIEVIKEAQAAGGAPAKAAPAAADTAGETKPKRRSTSRTRTGDEAPAEKAEKAGKADKKADKAAADKAAAQQQIEIPGQPTPKVNASAEQAAPADDAPSERRRRRATSDAGSPSATDTTVAVETRAEPKADTSAPQQSQGHQQGQGDARSDAEGGDGRRRDRRDRGDRDRGDRGDRGDRGDRGDRGERGRDRRNKGDDQQNQGGGRQDRQQQGGGGRQDRQQHDDGYDDDGSGRRGRRGRYRDRRGRRGRDEIQEPQINEDDVLIPVAGILDILDNYAFIRTSGYLPGPNDVYVSLAQVRKNGLRKGDHLTGAVRQPKEGERREKFNALVRLDSVNGMAPEHGRGRPEFNKLTPLYPQDRLRLETDPGVLTTRIIDLVAPIGKGQRGLIVAPPKTGKTMIMQAIANAITHNNPECHLMVVLVDERPEEVTDMQRSVKGEVISSTFDRPAEDHTTVAELAIERAKRLVELGHDVVVLLDSITRLGRAYNLAAPASGRILSGGVDSTALYPPKRFFGAARNIEDGGSLTILATALVDTGSRMDEVIFEEFKGTGNAELKLDRKLADKRIFPAVDVDASGTRKEEILLGSDELAITWKLRRVLHALDQQQAIELLLDKMKQTKSNAEFLIQIQKTTPTPGNGD.

Disordered regions lie at residues 1–38 (MSDT…RRGT) and 76–321 (QAAG…DEIQ). Composition is skewed to low complexity over residues 16-31 (AAAP…TGAG) and 76-93 (QAAG…ADTA). The segment covering 107 to 132 (RTGDEAPAEKAEKAGKADKKADKAAA) has biased composition (basic and acidic residues). The segment covering 153–163 (ASAEQAAPADD) has biased composition (low complexity). The segment covering 176–188 (DAGSPSATDTTVA) has biased composition (polar residues). Over residues 203–213 (QQSQGHQQGQG) the composition is skewed to low complexity. The segment covering 215–265 (ARSDAEGGDGRRRDRRDRGDRDRGDRGDRGDRGDRGDRGERGRDRRNKGDD) has biased composition (basic and acidic residues). Residues 301–315 (RRGRRGRYRDRRGRR) are compositionally biased toward basic residues. The 76-residue stretch at 331–406 (LIPVAGILDI…VRLDSVNGMA (76 aa)) folds into the Rho RNA-BD domain. ATP-binding positions include 449 to 454 (GKGQRG), 461 to 466 (KTGKTM), and arginine 492.

It belongs to the Rho family. Homohexamer. The homohexamer assembles into an open ring structure.

Facilitates transcription termination by a mechanism that involves Rho binding to the nascent RNA, activation of Rho's RNA-dependent ATPase activity, and release of the mRNA from the DNA template. The protein is Transcription termination factor Rho of Streptomyces lividans.